The chain runs to 440 residues: UDP-N-acetylglucosamine 1-carboxyvinyltransferase (440 aa).

Phosphoenolpyruvate is bound at residue 22-23 (KN). Arginine 102 lines the UDP-N-acetyl-alpha-D-glucosamine pocket. The active-site Proton donor is cysteine 126. Position 126 is a 2-(S-cysteinyl)pyruvic acid O-phosphothioketal (cysteine 126). UDP-N-acetyl-alpha-D-glucosamine is bound by residues 131–135 (RPVDQ), aspartate 320, and isoleucine 342.

It belongs to the EPSP synthase family. MurA subfamily.

It localises to the cytoplasm. It carries out the reaction phosphoenolpyruvate + UDP-N-acetyl-alpha-D-glucosamine = UDP-N-acetyl-3-O-(1-carboxyvinyl)-alpha-D-glucosamine + phosphate. Its pathway is cell wall biogenesis; peptidoglycan biosynthesis. In terms of biological role, cell wall formation. Adds enolpyruvyl to UDP-N-acetylglucosamine. The protein is UDP-N-acetylglucosamine 1-carboxyvinyltransferase of Acidovorax ebreus (strain TPSY) (Diaphorobacter sp. (strain TPSY)).